Here is a 178-residue protein sequence, read N- to C-terminus: Heavy metal-associated isoprenylated plant protein 30 (178 aa).

In terms of domain architecture, HMA spans 45-108 (LQTIDLKVRM…AVRRAGKRAE (64 aa)). Residues cysteine 56 and cysteine 59 each contribute to the a metal cation site. Cysteine 175 is modified (cysteine methyl ester). Cysteine 175 carries S-farnesyl cysteine lipidation. The propeptide at 176–178 (SLM) is removed in mature form.

This sequence belongs to the HIPP family. Interacts with ZHD3/HB21, ZHD11/HB29 and ZHD8/HB30.

In terms of biological role, heavy-metal-binding protein. This chain is Heavy metal-associated isoprenylated plant protein 30, found in Arabidopsis thaliana (Mouse-ear cress).